A 484-amino-acid chain; its full sequence is Ferrochelatase-2, chloroplastic (484 aa).

Belongs to the ferrochelatase family.

Its subcellular location is the plastid. The protein localises to the chloroplast. It carries out the reaction heme b + 2 H(+) = protoporphyrin IX + Fe(2+). It functions in the pathway porphyrin-containing compound metabolism; protoheme biosynthesis; protoheme from protoporphyrin-IX: step 1/1. In terms of biological role, catalyzes the ferrous insertion into protoporphyrin IX. In Hordeum vulgare (Barley), this protein is Ferrochelatase-2, chloroplastic (HEMH).